Consider the following 177-residue polypeptide: Large ribosomal subunit protein uL5 (177 aa).

Belongs to the universal ribosomal protein uL5 family. Part of the 50S ribosomal subunit; part of the 5S rRNA/L5/L18/L25 subcomplex. Contacts the 5S rRNA and the P site tRNA. Forms a bridge to the 30S subunit in the 70S ribosome.

This is one of the proteins that bind and probably mediate the attachment of the 5S RNA into the large ribosomal subunit, where it forms part of the central protuberance. In the 70S ribosome it contacts protein S13 of the 30S subunit (bridge B1b), connecting the 2 subunits; this bridge is implicated in subunit movement. Contacts the P site tRNA; the 5S rRNA and some of its associated proteins might help stabilize positioning of ribosome-bound tRNAs. The protein is Large ribosomal subunit protein uL5 of Wolbachia sp. subsp. Brugia malayi (strain TRS).